A 485-amino-acid polypeptide reads, in one-letter code: Ribulose bisphosphate carboxylase large chain (485 aa).

The substrate site is built by Asn-124 and Thr-174. Lys-176 serves as the catalytic Proton acceptor. Residue Lys-178 participates in substrate binding. Residues Lys-202, Asp-204, and Glu-205 each coordinate Mg(2+). Lys-202 carries the N6-carboxylysine modification. Catalysis depends on His-294, which acts as the Proton acceptor. Substrate is bound by residues Arg-295, His-327, and Ser-379.

It belongs to the RuBisCO large chain family. Type I subfamily. In terms of assembly, heterohexadecamer of 8 large chains and 8 small chains. Requires Mg(2+) as cofactor.

The catalysed reaction is 2 (2R)-3-phosphoglycerate + 2 H(+) = D-ribulose 1,5-bisphosphate + CO2 + H2O. It carries out the reaction D-ribulose 1,5-bisphosphate + O2 = 2-phosphoglycolate + (2R)-3-phosphoglycerate + 2 H(+). Functionally, ruBisCO catalyzes two reactions: the carboxylation of D-ribulose 1,5-bisphosphate, the primary event in carbon dioxide fixation, as well as the oxidative fragmentation of the pentose substrate. Both reactions occur simultaneously and in competition at the same active site. This Rhodopseudomonas palustris (strain BisA53) protein is Ribulose bisphosphate carboxylase large chain.